Here is a 190-residue protein sequence, read N- to C-terminus: Subtilisin inhibitor CLSI-II (190 aa).

Cystine bridges form between cysteine 44–cysteine 88 and cysteine 142–cysteine 149.

The protein belongs to the protease inhibitor I3 (leguminous Kunitz-type inhibitor) family. As to quaternary structure, forms active dimers on storage in aqueous solution, possibly through formation of an intermolecular disulfide bond. In terms of processing, the N-terminal Asn is removed in about 50% of both the CLSI-II and CLSI-III chains.

The protein resides in the secreted. Functionally, inhibits subtilisin-type microbial serine proteases incuding proteinase K, subtilisin BPN', subtilisin Carlsberg and subtilisin E in a non-stoichiometric manner. Weakly inhibits A.oryzae protease and some metalloproteases including pronase E. Does not inhibit trypsin, chymotrypsin, S.griseus alkaline protease or A.lyticus lysyl endopeptidase. CLSI-II has a wider inhibitory specificity than CLSI-III. This is Subtilisin inhibitor CLSI-II from Canavalia lineata (Beach bean).